The sequence spans 349 residues: Phosphate acyltransferase (349 aa).

The protein belongs to the PlsX family. As to quaternary structure, homodimer. Probably interacts with PlsY.

It is found in the cytoplasm. It catalyses the reaction a fatty acyl-[ACP] + phosphate = an acyl phosphate + holo-[ACP]. It participates in lipid metabolism; phospholipid metabolism. In terms of biological role, catalyzes the reversible formation of acyl-phosphate (acyl-PO(4)) from acyl-[acyl-carrier-protein] (acyl-ACP). This enzyme utilizes acyl-ACP as fatty acyl donor, but not acyl-CoA. This is Phosphate acyltransferase from Rhodopseudomonas palustris (strain BisA53).